The chain runs to 134 residues: SNAPIN protein homolog (134 aa).

The stretch at Gln-50 to Leu-124 forms a coiled coil.

It belongs to the SNAPIN family. As to quaternary structure, component of the biogenesis of lysosome-related organelles complex-1 (BLOC-1) composed of Blos1, Blos2, Blos3, Blos4, Dysb, Muted, Pldn and Snapin. Interacts with Blos2 and Dysb.

It localises to the membrane. Its subcellular location is the cytoplasm. The protein localises to the cytosol. Functionally, component of the biogenesis of lysosome-related organelles complex-1 (BLOC-1) involved in pigment granule biogenesis. May participate in the coupling of lysosomes to microtubule plus-end-directed kinesin motor. This Drosophila melanogaster (Fruit fly) protein is SNAPIN protein homolog.